We begin with the raw amino-acid sequence, 318 residues long: Ribose-phosphate pyrophosphokinase 1 (318 aa).

Residues 43 to 45 (DGE) and 102 to 103 (RQ) contribute to the ATP site. Histidine 136 and aspartate 176 together coordinate Mg(2+). Lysine 199 is an active-site residue. Residues arginine 201, aspartate 225, and 229–233 (DTAGT) each bind D-ribose 5-phosphate.

Belongs to the ribose-phosphate pyrophosphokinase family. Class I subfamily. Homohexamer. Requires Mg(2+) as cofactor.

The protein localises to the cytoplasm. The catalysed reaction is D-ribose 5-phosphate + ATP = 5-phospho-alpha-D-ribose 1-diphosphate + AMP + H(+). It participates in metabolic intermediate biosynthesis; 5-phospho-alpha-D-ribose 1-diphosphate biosynthesis; 5-phospho-alpha-D-ribose 1-diphosphate from D-ribose 5-phosphate (route I): step 1/1. Functionally, involved in the biosynthesis of the central metabolite phospho-alpha-D-ribosyl-1-pyrophosphate (PRPP) via the transfer of pyrophosphoryl group from ATP to 1-hydroxyl of ribose-5-phosphate (Rib-5-P). This is Ribose-phosphate pyrophosphokinase 1 from Listeria innocua serovar 6a (strain ATCC BAA-680 / CLIP 11262).